Here is an 80-residue protein sequence, read N- to C-terminus: Toxin Acra I-3 (80 aa).

The first 22 residues, 1 to 22 (MMKLVLLSVIVILFSLIGSIHG), serve as a signal peptide directing secretion. Residues 25–80 (VPGNYPLDSSGNKYPCTVLGDNQSCIDVCKKHGVKYGYCYGFKCWCEYLKDKNVSL) enclose the LCN-type CS-alpha/beta domain. Disulfide bonds link C40–C63, C49–C68, and C53–C70.

This sequence belongs to the long (3 C-C) scorpion toxin superfamily. Sodium/Potassium channel inhibitor family. As to expression, expressed by the venom gland.

The protein resides in the secreted. In terms of biological role, probable neurotoxin that inhibits ion channels. Is toxic to mice. This chain is Toxin Acra I-3, found in Androctonus crassicauda (Arabian fat-tailed scorpion).